The following is a 314-amino-acid chain: Epithelial-stromal interaction protein 1 (314 aa).

3 disordered regions span residues 1-72 (MYTR…PNES), 227-272 (WAGS…RAQI), and 289-314 (QGKSQPGGLEQSGGCCNMNSTDSWGL). Residues 18 to 30 (SRDHAGAGQRREL) are compositionally biased toward basic and acidic residues. A Phosphoserine modification is found at serine 39. The stretch at 71–180 (ESRRQKIQRI…QEDIRRATFR (110 aa)) forms a coiled coil. Basic and acidic residues predominate over residues 232–272 (AHRDSPQKEDNPRLQKTRDGHQKNKLLETKGQHQEEERAQI). Residues 305-314 (NMNSTDSWGL) are compositionally biased toward polar residues.

Expressed in the spleen, with expression in T cells, B cells, natural killer cells and natural killer T cells and high expression in monocytes and macrophages.

Plays a role in M1 macrophage polarization and is required for the proper regulation of gene expression during M1 versus M2 macrophage differentiation. Might play a role in RELA/p65 and STAT1 phosphorylation and nuclear localization upon activation of macrophages. This chain is Epithelial-stromal interaction protein 1 (Epsti1), found in Mus musculus (Mouse).